The sequence spans 203 residues: Small ribosomal subunit protein uS7B (203 aa).

It belongs to the universal ribosomal protein uS7 family. In terms of assembly, component of the small ribosomal subunit (SSU). Mature yeast ribosomes consist of a small (40S) and a large (60S) subunit. The 40S small subunit contains 1 molecule of ribosomal RNA (18S rRNA) and at least 33 different proteins. The large 60S subunit contains 3 rRNA molecules (25S, 5.8S and 5S rRNA) and at least 46 different proteins.

It localises to the cytoplasm. In terms of biological role, component of the ribosome, a large ribonucleoprotein complex responsible for the synthesis of proteins in the cell. The small ribosomal subunit (SSU) binds messenger RNAs (mRNAs) and translates the encoded message by selecting cognate aminoacyl-transfer RNA (tRNA) molecules. The large subunit (LSU) contains the ribosomal catalytic site termed the peptidyl transferase center (PTC), which catalyzes the formation of peptide bonds, thereby polymerizing the amino acids delivered by tRNAs into a polypeptide chain. The nascent polypeptides leave the ribosome through a tunnel in the LSU and interact with protein factors that function in enzymatic processing, targeting, and the membrane insertion of nascent chains at the exit of the ribosomal tunnel. The chain is Small ribosomal subunit protein uS7B (rps502) from Schizosaccharomyces pombe (strain 972 / ATCC 24843) (Fission yeast).